The chain runs to 289 residues: Ribosomal protein L11 methyltransferase (289 aa).

Residues threonine 142, glycine 163, aspartate 185, and asparagine 226 each contribute to the S-adenosyl-L-methionine site.

This sequence belongs to the methyltransferase superfamily. PrmA family.

The protein resides in the cytoplasm. The catalysed reaction is L-lysyl-[protein] + 3 S-adenosyl-L-methionine = N(6),N(6),N(6)-trimethyl-L-lysyl-[protein] + 3 S-adenosyl-L-homocysteine + 3 H(+). Methylates ribosomal protein L11. The polypeptide is Ribosomal protein L11 methyltransferase (Legionella pneumophila (strain Corby)).